We begin with the raw amino-acid sequence, 425 residues long: Gamma-glutamyl phosphate reductase (425 aa).

This sequence belongs to the gamma-glutamyl phosphate reductase family.

The protein resides in the cytoplasm. The catalysed reaction is L-glutamate 5-semialdehyde + phosphate + NADP(+) = L-glutamyl 5-phosphate + NADPH + H(+). Its pathway is amino-acid biosynthesis; L-proline biosynthesis; L-glutamate 5-semialdehyde from L-glutamate: step 2/2. Functionally, catalyzes the NADPH-dependent reduction of L-glutamate 5-phosphate into L-glutamate 5-semialdehyde and phosphate. The product spontaneously undergoes cyclization to form 1-pyrroline-5-carboxylate. This chain is Gamma-glutamyl phosphate reductase, found in Opitutus terrae (strain DSM 11246 / JCM 15787 / PB90-1).